The following is a 647-amino-acid chain: Dihydrolipoyllysine-residue acetyltransferase component of pyruvate dehydrogenase complex (647 aa).

The transit peptide at methionine 1–tyrosine 86 directs the protein to the mitochondrion. The region spanning histidine 91–valine 167 is the Lipoyl-binding 1 domain. Serine 100 is modified (phosphoserine). Lysine 132 carries the post-translational modification N6-lipoyllysine. The segment at serine 184–proline 216 is disordered. Pro residues predominate over residues proline 187–threonine 205. Residues histidine 218–valine 294 enclose the Lipoyl-binding 2 domain. N6-lipoyllysine is present on lysine 259. Residues valine 311–lysine 352 are disordered. Positions proline 316–proline 348 are enriched in pro residues. The Peripheral subunit-binding (PSBD) domain occupies phenylalanine 356–valine 393. A CoA-binding site is contributed by arginine 461. The residue at position 466 (lysine 466) is an N6-acetyllysine. N6-succinyllysine is present on lysine 473. Serine 475 serves as a coordination point for CoA. The residue at position 547 (lysine 547) is an N6-succinyllysine. CoA is bound by residues serine 566, asparagine 567, and glycine 591. Catalysis depends on residues histidine 620 and aspartate 624.

The protein belongs to the 2-oxoacid dehydrogenase family. In terms of assembly, part of the pyruvate dehydrogenase complex (PDHc) that is a multi-enzyme complex composed of multiple copies of three enzymes, pyruvate dehydrogenase (subunits PDH1A and PDHB, E1 component), dihydrolipoamide acetyltransferase (DLAT, E2 component), and dihydrolipoamide dehydrogenase (DLD, E3 component) to which is added an additional protein the E3-binding protein (PDHX, E3BP). In terms of structural architecture, the E2 and E3BP components assemble into a 60meric central core with icosahedral symmetry. The central core is decorated with E1 and E3 proteins. Currently, two alternative models for the E2:E3BP stoichiometry are considered as being either 48:12 (E2(48)-E3BP(12)) or 40:20 (E2(40)-E3BP(20)). Interacts with PDK2 and PDK3. Interacts with SIRT4. Interacts with PDHB. The cofactor is (R)-lipoate. Delipoylated at Lys-132 and Lys-259 by SIRT4, delipoylation decreases the PHD complex activity.

Its subcellular location is the mitochondrion matrix. It catalyses the reaction N(6)-[(R)-dihydrolipoyl]-L-lysyl-[protein] + acetyl-CoA = N(6)-[(R)-S(8)-acetyldihydrolipoyl]-L-lysyl-[protein] + CoA. Functionally, as part of the pyruvate dehydrogenase complex, catalyzes the transfers of an acetyl group to a lipoic acid moiety. The pyruvate dehydrogenase complex, catalyzes the overall conversion of pyruvate to acetyl-CoA and CO(2), and thereby links cytoplasmic glycolysis and the mitochondrial tricarboxylic acid (TCA) cycle. The sequence is that of Dihydrolipoyllysine-residue acetyltransferase component of pyruvate dehydrogenase complex from Bos taurus (Bovine).